The chain runs to 322 residues: Probable manganese-dependent inorganic pyrophosphatase (322 aa).

Mn(2+)-binding residues include histidine 10, aspartate 14, aspartate 16, aspartate 86, histidine 108, and aspartate 160.

Belongs to the PPase class C family. It depends on Mn(2+) as a cofactor.

It is found in the cytoplasm. The enzyme catalyses diphosphate + H2O = 2 phosphate + H(+). The chain is Probable manganese-dependent inorganic pyrophosphatase (ppaC) from Archaeoglobus fulgidus (strain ATCC 49558 / DSM 4304 / JCM 9628 / NBRC 100126 / VC-16).